The following is a 214-amino-acid chain: tRNA (guanine-N(7)-)-methyltransferase (214 aa).

Glu44, Glu69, Asp96, and Asp118 together coordinate S-adenosyl-L-methionine. The active site involves Asp118. Residues Lys122, Asp154, and 191–194 (TEYE) each bind substrate.

It belongs to the class I-like SAM-binding methyltransferase superfamily. TrmB family.

The enzyme catalyses guanosine(46) in tRNA + S-adenosyl-L-methionine = N(7)-methylguanosine(46) in tRNA + S-adenosyl-L-homocysteine. The protein operates within tRNA modification; N(7)-methylguanine-tRNA biosynthesis. In terms of biological role, catalyzes the formation of N(7)-methylguanine at position 46 (m7G46) in tRNA. The polypeptide is tRNA (guanine-N(7)-)-methyltransferase (Listeria welshimeri serovar 6b (strain ATCC 35897 / DSM 20650 / CCUG 15529 / CIP 8149 / NCTC 11857 / SLCC 5334 / V8)).